Reading from the N-terminus, the 354-residue chain is Probable L-ascorbate-6-phosphate lactonase UlaG (354 aa).

It belongs to the UlaG family. It depends on a divalent metal cation as a cofactor.

Its subcellular location is the cytoplasm. It catalyses the reaction L-ascorbate 6-phosphate + H2O = 3-dehydro-L-gulonate 6-phosphate. Its pathway is cofactor degradation; L-ascorbate degradation; D-xylulose 5-phosphate from L-ascorbate: step 1/4. Its function is as follows. Probably catalyzes the hydrolysis of L-ascorbate-6-P into 3-keto-L-gulonate-6-P. Is essential for L-ascorbate utilization under anaerobic conditions. This Shigella boydii serotype 4 (strain Sb227) protein is Probable L-ascorbate-6-phosphate lactonase UlaG.